The chain runs to 245 residues: 4-hydroxy-tetrahydrodipicolinate reductase (245 aa).

NAD(+) contacts are provided by residues 7-12, 75-77, and 102-105; these read GAKGKV, GTT, and APNF. H132 (proton donor/acceptor) is an active-site residue. H133 is a binding site for (S)-2,3,4,5-tetrahydrodipicolinate. K136 acts as the Proton donor in catalysis. 142–143 is a binding site for (S)-2,3,4,5-tetrahydrodipicolinate; sequence GT.

Belongs to the DapB family.

It is found in the cytoplasm. The enzyme catalyses (S)-2,3,4,5-tetrahydrodipicolinate + NAD(+) + H2O = (2S,4S)-4-hydroxy-2,3,4,5-tetrahydrodipicolinate + NADH + H(+). It carries out the reaction (S)-2,3,4,5-tetrahydrodipicolinate + NADP(+) + H2O = (2S,4S)-4-hydroxy-2,3,4,5-tetrahydrodipicolinate + NADPH + H(+). It functions in the pathway amino-acid biosynthesis; L-lysine biosynthesis via DAP pathway; (S)-tetrahydrodipicolinate from L-aspartate: step 4/4. In terms of biological role, catalyzes the conversion of 4-hydroxy-tetrahydrodipicolinate (HTPA) to tetrahydrodipicolinate. The protein is 4-hydroxy-tetrahydrodipicolinate reductase of Mycobacterium bovis (strain BCG / Pasteur 1173P2).